A 662-amino-acid polypeptide reads, in one-letter code: ABC transporter G family member 25 (662 aa).

Residues 1–30 (MSAFDGVENQMNGPDSSPRLSQDPREPRSL) are disordered. Residues 9 to 20 (NQMNGPDSSPRL) are compositionally biased toward polar residues. The N-linked (GlcNAc...) asparagine glycan is linked to asparagine 56. The 240-residue stretch at 69-308 (QKPSDETRST…FESVGFSPAF (240 aa)) folds into the ABC transporter domain. 101–108 (GPSGSGKS) is an ATP binding site. N-linked (GlcNAc...) asparagine glycosylation is present at asparagine 122. Transmembrane regions (helical) follow at residues 374–394 (VNGG…CILL), 406–426 (FDLL…LMWW), 437–457 (LGLL…NAVF), 489–509 (LSME…MVYL), 522–542 (VLLL…AAIM), 547–567 (ASTI…YYVN), and 629–649 (VIGD…FFGY). Residues 388–594 (SQLCILLHRL…CYRLLVAIQY (207 aa)) enclose the ABC transmembrane type-2 domain.

Belongs to the ABC transporter superfamily. ABCG family. Eye pigment precursor importer (TC 3.A.1.204) subfamily. In terms of tissue distribution, mainly expressed in vascular tissues,predominantly in phloem companion cells, with highest levels in roots and seeds, and lower levels in seedlings, stems, leaves and flowers. Mostly observed in inflorescence meristems relative to cauline leaves and developing siliques. In seeds, mainly expressed in the endosperm and, to a lesser extent, in the embryo.

It localises to the cell membrane. It catalyses the reaction abscisate(in) + ATP + H2O = abscisate(out) + ADP + phosphate + H(+). ADP and vanadate (ABC transporters inhibitor) inhibit the ATP-dependent abscisic acid (ABA) uptake. High affinity abscisic acid (ABA) transporter that mediates the export of ABA, with a preference for (+)-ABA, through the plasma membrane, especially in vascular tissues (e.g. phloem companion cells), and is involved in the intercellular ABA signaling pathway. Together with ABCG31, export ABA from the endosperm to deliver it to the embryo via ABCG30 and ABCG40-mediated import to suppress radicle extension and subsequent embryonic growth. In Arabidopsis thaliana (Mouse-ear cress), this protein is ABC transporter G family member 25.